The chain runs to 172 residues: Peptide deformylase 1 (172 aa).

Residues cysteine 91 and histidine 133 each contribute to the Fe cation site. Glutamate 134 is a catalytic residue. Residue histidine 137 coordinates Fe cation.

The protein belongs to the polypeptide deformylase family. Fe(2+) is required as a cofactor.

It catalyses the reaction N-terminal N-formyl-L-methionyl-[peptide] + H2O = N-terminal L-methionyl-[peptide] + formate. Its function is as follows. Removes the formyl group from the N-terminal Met of newly synthesized proteins. Requires at least a dipeptide for an efficient rate of reaction. N-terminal L-methionine is a prerequisite for activity but the enzyme has broad specificity at other positions. The polypeptide is Peptide deformylase 1 (Vibrio parahaemolyticus serotype O3:K6 (strain RIMD 2210633)).